A 309-amino-acid chain; its full sequence is Coenzyme PQQ synthesis protein B (309 aa).

It belongs to the PqqB family.

Its pathway is cofactor biosynthesis; pyrroloquinoline quinone biosynthesis. May be involved in the transport of PQQ or its precursor to the periplasm. This is Coenzyme PQQ synthesis protein B from Bradyrhizobium diazoefficiens (strain JCM 10833 / BCRC 13528 / IAM 13628 / NBRC 14792 / USDA 110).